A 24-amino-acid chain; its full sequence is Superoxide dismutase [Cu-Zn], chloroplastic (24 aa).

The protein belongs to the Cu-Zn superoxide dismutase family. Homodimer. Cu cation serves as cofactor. It depends on Zn(2+) as a cofactor.

It localises to the plastid. The protein localises to the chloroplast. The catalysed reaction is 2 superoxide + 2 H(+) = H2O2 + O2. Functionally, destroys radicals which are normally produced within the cells and which are toxic to biological systems. In Picea abies (Norway spruce), this protein is Superoxide dismutase [Cu-Zn], chloroplastic.